A 425-amino-acid chain; its full sequence is UDP-sugar transporter protein SLC35A5 (425 aa).

The Cytoplasmic portion of the chain corresponds to 1-7 (MESNCGH). A helical membrane pass occupies residues 8–28 (PMLSVSSAMYTFLLGAIFITL). Topologically, residues 29–52 (SSSRILLVKYSANEENKYDYLPTT) are lumenal. A helical membrane pass occupies residues 53–73 (VNVCSELVKLVFCALVSFWVL). Over 74–92 (KKEDHQNRKLRCGSWKEFF) the chain is Cytoplasmic. Residues 93–115 (NFMKWSIPAFLYFLDNLIVFYVL) form a helical membrane-spanning segment. The Lumenal portion of the chain corresponds to 116-119 (SYLQ). A helical membrane pass occupies residues 120–142 (PAMAVIFSNFSIITTALLFRIVL). Residues 143-147 (KRHLN) are Cytoplasmic-facing. The chain crosses the membrane as a helical span at residues 148 to 168 (GIQWASLLILFLSIVALTSGT). The Lumenal segment spans residues 169–228 (ETSQHSLAGHGFHHDALFSPSNSCLLFRSECPRKDNCTAKEWTFSEAQWNTTARVFSHIR). N-linked (GlcNAc...) asparagine glycans are attached at residues Asn-204 and Asn-218. A helical membrane pass occupies residues 229–249 (LGLGHVLIIVQCFISSMANIY). Topologically, residues 250–263 (NEKILKEGNQLTES) are cytoplasmic. Residues 264–284 (IFVQNSKLYFFGVLFNGLTLG) traverse the membrane as a helical segment. The Lumenal segment spans residues 285-303 (LQSGNRDQIKNCGIFYGHN). Residues 304 to 324 (AFSVALIFVTAFQGLSVAFIL) form a helical membrane-spanning segment. At 325–330 (KFLDNM) the chain is on the cytoplasmic side. The chain crosses the membrane as a helical span at residues 331–351 (FHVLMAQVTTVVITTVSVLVF). Topologically, residues 352-354 (DFR) are lumenal. The chain crosses the membrane as a helical span at residues 355-375 (PSLEFFLEAPSVLLSILIYNA). The Cytoplasmic portion of the chain corresponds to 376–425 (SNPQGVENVPRKERIRDLSGTLWERSSGDGEELERLTKPKSDIESDEDTF). A phosphoserine mark is found at Ser-394, Ser-416, and Ser-420. The disordered stretch occupies residues 398 to 425 (WERSSGDGEELERLTKPKSDIESDEDTF). Basic and acidic residues predominate over residues 408–418 (LERLTKPKSDI).

Belongs to the nucleotide-sugar transporter family. SLC35A subfamily. As to quaternary structure, probably forms homooligomers and heterooligomers with SLC35A1, SLC35A2, SLC35A3 and SLC35A4.

It localises to the golgi apparatus membrane. It carries out the reaction UMP(out) + UDP-alpha-D-glucuronate(in) = UMP(in) + UDP-alpha-D-glucuronate(out). The catalysed reaction is UMP(out) + UDP-N-acetyl-alpha-D-glucosamine(in) = UMP(in) + UDP-N-acetyl-alpha-D-glucosamine(out). It catalyses the reaction UDP-N-acetyl-alpha-D-galactosamine(in) + UMP(out) = UDP-N-acetyl-alpha-D-galactosamine(out) + UMP(in). Probable UDP-sugar:UMP transmembrane antiporter involved in UDP-alpha-D-glucuronate/UDP-GlcA, UDP-GlcNAc/UDP-N-acetyl-alpha-D-glucosamine and UDP-N-acetyl-alpha-D-galactosamine/UDP-GalNAc transport from the cytosol to the lumen of the Golgi. This chain is UDP-sugar transporter protein SLC35A5, found in Bos taurus (Bovine).